A 251-amino-acid polypeptide reads, in one-letter code: Probable transcriptional regulatory protein Francci3_1368 (251 aa).

The protein belongs to the TACO1 family.

It is found in the cytoplasm. The polypeptide is Probable transcriptional regulatory protein Francci3_1368 (Frankia casuarinae (strain DSM 45818 / CECT 9043 / HFP020203 / CcI3)).